A 375-amino-acid chain; its full sequence is Beta sliding clamp (375 aa).

This sequence belongs to the beta sliding clamp family. Forms a ring-shaped head-to-tail homodimer around DNA which binds and tethers DNA polymerases and other proteins to the DNA. The DNA replisome complex has a single clamp-loading complex (3 tau and 1 each of delta, delta', psi and chi subunits) which binds 3 Pol III cores (1 core on the leading strand and 2 on the lagging strand) each with a beta sliding clamp dimer. Additional proteins in the replisome are other copies of gamma, psi and chi, Ssb, DNA helicase and RNA primase.

The protein localises to the cytoplasm. Functionally, confers DNA tethering and processivity to DNA polymerases and other proteins. Acts as a clamp, forming a ring around DNA (a reaction catalyzed by the clamp-loading complex) which diffuses in an ATP-independent manner freely and bidirectionally along dsDNA. Initially characterized for its ability to contact the catalytic subunit of DNA polymerase III (Pol III), a complex, multichain enzyme responsible for most of the replicative synthesis in bacteria; Pol III exhibits 3'-5' exonuclease proofreading activity. The beta chain is required for initiation of replication as well as for processivity of DNA replication. This Mycoplasma capricolum subsp. capricolum (strain California kid / ATCC 27343 / NCTC 10154) protein is Beta sliding clamp (dnaN).